The sequence spans 71 residues: Glucose-repressible gene protein (71 aa).

The tract at residues T19–H71 is disordered. Basic and acidic residues predominate over residues I49–H71.

This Neurospora crassa (strain ATCC 24698 / 74-OR23-1A / CBS 708.71 / DSM 1257 / FGSC 987) protein is Glucose-repressible gene protein (grg-1).